Consider the following 309-residue polypeptide: PI-PLC X domain-containing protein 1 (309 aa).

The PI-PLC X-box domain occupies His17–Ser193.

The chain is PI-PLC X domain-containing protein 1 (plcxd1) from Danio rerio (Zebrafish).